A 500-amino-acid chain; its full sequence is Glycerol kinase (500 aa).

Position 13 (T13) interacts with ADP. The ATP site is built by T13, T14, and S15. T13 serves as a coordination point for sn-glycerol 3-phosphate. R17 serves as a coordination point for ADP. Sn-glycerol 3-phosphate is bound by residues R83, E84, Y135, and D244. 5 residues coordinate glycerol: R83, E84, Y135, D244, and Q245. T266 and G309 together coordinate ADP. T266, G309, Q313, and G410 together coordinate ATP. ADP contacts are provided by G410 and N414.

The protein belongs to the FGGY kinase family.

The enzyme catalyses glycerol + ATP = sn-glycerol 3-phosphate + ADP + H(+). It participates in polyol metabolism; glycerol degradation via glycerol kinase pathway; sn-glycerol 3-phosphate from glycerol: step 1/1. Its activity is regulated as follows. Inhibited by fructose 1,6-bisphosphate (FBP). Key enzyme in the regulation of glycerol uptake and metabolism. Catalyzes the phosphorylation of glycerol to yield sn-glycerol 3-phosphate. The chain is Glycerol kinase from Burkholderia multivorans (strain ATCC 17616 / 249).